The following is a 700-amino-acid chain: Translation initiation factor IF-2 (700 aa).

Residues 58–85 are disordered; that stretch reads KKEVKKQKEPSKEKGKSSEQVKVKEKSK. In terms of domain architecture, tr-type G spans 191-365; that stretch reads PRPPVVTIMG…EMQEIRCIPD (175 aa). The G1 stretch occupies residues 200 to 207; that stretch reads GHVDHGKT. Residue 200–207 coordinates GTP; the sequence is GHVDHGKT. The tract at residues 225 to 229 is G2; it reads GITQS. A G3 region spans residues 246–249; sequence DTPG. Residues 246-250 and 300-303 each bind GTP; these read DTPGH and NKID. The G4 stretch occupies residues 300 to 303; it reads NKID. A G5 region spans residues 337-339; the sequence is SAK.

This sequence belongs to the TRAFAC class translation factor GTPase superfamily. Classic translation factor GTPase family. IF-2 subfamily.

Its subcellular location is the cytoplasm. One of the essential components for the initiation of protein synthesis. Protects formylmethionyl-tRNA from spontaneous hydrolysis and promotes its binding to the 30S ribosomal subunits. Also involved in the hydrolysis of GTP during the formation of the 70S ribosomal complex. This Petrotoga mobilis (strain DSM 10674 / SJ95) protein is Translation initiation factor IF-2.